The sequence spans 367 residues: UDP-N-acetylglucosamine--N-acetylmuramyl-(pentapeptide) pyrophosphoryl-undecaprenol N-acetylglucosamine transferase (367 aa).

UDP-N-acetyl-alpha-D-glucosamine is bound by residues 13 to 15 (TGG), N127, R168, S200, I251, and Q296.

The protein belongs to the glycosyltransferase 28 family. MurG subfamily.

The protein resides in the cell inner membrane. It carries out the reaction di-trans,octa-cis-undecaprenyl diphospho-N-acetyl-alpha-D-muramoyl-L-alanyl-D-glutamyl-meso-2,6-diaminopimeloyl-D-alanyl-D-alanine + UDP-N-acetyl-alpha-D-glucosamine = di-trans,octa-cis-undecaprenyl diphospho-[N-acetyl-alpha-D-glucosaminyl-(1-&gt;4)]-N-acetyl-alpha-D-muramoyl-L-alanyl-D-glutamyl-meso-2,6-diaminopimeloyl-D-alanyl-D-alanine + UDP + H(+). It functions in the pathway cell wall biogenesis; peptidoglycan biosynthesis. Functionally, cell wall formation. Catalyzes the transfer of a GlcNAc subunit on undecaprenyl-pyrophosphoryl-MurNAc-pentapeptide (lipid intermediate I) to form undecaprenyl-pyrophosphoryl-MurNAc-(pentapeptide)GlcNAc (lipid intermediate II). This chain is UDP-N-acetylglucosamine--N-acetylmuramyl-(pentapeptide) pyrophosphoryl-undecaprenol N-acetylglucosamine transferase, found in Flavobacterium psychrophilum (strain ATCC 49511 / DSM 21280 / CIP 103535 / JIP02/86).